We begin with the raw amino-acid sequence, 236 residues long: MYQLGDVKKIVLPGDPVEVQGKIRNGIYRGPDNKYYSEYFGTLQVSDQYVDVVPFSGQYIPRKGDKVIGKIIEVGPSTWTVDINSPYFAMLHMNDTPWRISSGDLKRYLNSGDYVYAKIMSVNEIKESWLTLKEPGLKKLEGGHMVLIHASRVPRVIGKGGGMVNMVKELTSTRIIIGQNGLIWIDGPIEGVTMAIAAIEMIEREAHTEGLTVRVESFLKELRGDKDGNQQDKANQ.

The S1 motif domain maps to 64–133 (GDKVIGKIIE…EIKESWLTLK (70 aa)). One can recognise a KH domain in the interval 141 to 199 (EGGHMVLIHASRVPRVIGKGGGMVNMVKELTSTRIIIGQNGLIWIDGPIEGVTMAIAAI).

This sequence belongs to the RRP4 family. As to quaternary structure, component of the archaeal exosome complex. Forms a trimer of Rrp4 and/or Csl4 subunits. The trimer associates with a hexameric ring-like arrangement composed of 3 Rrp41-Rrp42 heterodimers.

The protein resides in the cytoplasm. In terms of biological role, non-catalytic component of the exosome, which is a complex involved in RNA degradation. Increases the RNA binding and the efficiency of RNA degradation. Confers strong poly(A) specificity to the exosome. This Thermoplasma volcanium (strain ATCC 51530 / DSM 4299 / JCM 9571 / NBRC 15438 / GSS1) protein is Exosome complex component Rrp4.